Consider the following 387-residue polypeptide: Acetylornithine aminotransferase (387 aa).

Pyridoxal 5'-phosphate contacts are provided by residues 97–98 and Phe-130; that span reads GT. Arg-133 contacts N(2)-acetyl-L-ornithine. Residue 215 to 218 participates in pyridoxal 5'-phosphate binding; that stretch reads DEVQ. Residue Lys-244 is modified to N6-(pyridoxal phosphate)lysine. Thr-273 serves as a coordination point for pyridoxal 5'-phosphate.

The protein belongs to the class-III pyridoxal-phosphate-dependent aminotransferase family. ArgD subfamily. As to quaternary structure, homodimer. It depends on pyridoxal 5'-phosphate as a cofactor.

It localises to the cytoplasm. The enzyme catalyses N(2)-acetyl-L-ornithine + 2-oxoglutarate = N-acetyl-L-glutamate 5-semialdehyde + L-glutamate. It participates in amino-acid biosynthesis; L-arginine biosynthesis; N(2)-acetyl-L-ornithine from L-glutamate: step 4/4. In Clostridium acetobutylicum (strain ATCC 824 / DSM 792 / JCM 1419 / IAM 19013 / LMG 5710 / NBRC 13948 / NRRL B-527 / VKM B-1787 / 2291 / W), this protein is Acetylornithine aminotransferase.